The primary structure comprises 298 residues: Mitochondrial glycine transporter (298 aa).

Solcar repeat units lie at residues 5 to 84, 105 to 189, and 211 to 295; these read TKTR…MRTA, LTTY…AKEV, and TSTL…LIKL. 6 helical membrane-spanning segments follow: residues 11-36, 59-85, 111-136, 164-187, 215-241, and 270-288; these read LIGG…TRIQ, GTLP…RTAI, LISG…VRYE, GFGP…EKAK, VNST…KTRM, and GLSM…AWGI.

It belongs to the mitochondrial carrier (TC 2.A.29) family. SLC25A38 subfamily.

Its subcellular location is the mitochondrion inner membrane. The enzyme catalyses glycine(in) = glycine(out). Its function is as follows. Mitochondrial glycine transporter that imports glycine into the mitochondrial matrix. Plays an important role in providing glycine for the first enzymatic step in heme biosynthesis, the condensation of glycine with succinyl-CoA to produce 5-aminolevulinate (ALA) in the mitochondrial matrix. This chain is Mitochondrial glycine transporter, found in Vanderwaltozyma polyspora (strain ATCC 22028 / DSM 70294 / BCRC 21397 / CBS 2163 / NBRC 10782 / NRRL Y-8283 / UCD 57-17) (Kluyveromyces polysporus).